A 667-amino-acid polypeptide reads, in one-letter code: E3 ubiquitin-protein ligase Midline-1 (667 aa).

The RING-type zinc-finger motif lies at 10 to 60 (CPICLELLEDPLLLPCAHSLCFNCAHRILVSHCATNEPVESINAFQCPTCR). 2 positions are modified to phosphoserine: S92 and S96. 2 B box-type zinc fingers span residues 116 to 165 (KVLC…IEPI) and 172 to 212 (GLMC…VAAL). The Zn(2+) site is built by C119, C122, C134, C137, C142, C145, H150, H159, C175, H178, C198, and H204. The stretch at 205 to 264 (RDHQVAALSERYDKLKQNLESNLTNLIKRNTELETLLAKLIQTCQHVEVNASRQEAKLTE) forms a coiled coil. Positions 320–379 (LKENDHARFLQTAKNITERVSMATASSQVLIPEINLNDTFDTFALDFSREKKLLECLDYL) constitute a COS domain. The region spanning 381 to 484 (APNPPTIREE…EPGKLKTNSQ (104 aa)) is the Fibronectin type-III domain. Polar residues predominate over residues 471–485 (SRSSEPGKLKTNSQP). The segment at 471–524 (SRSSEPGKLKTNSQPFKLDPKSAHRKLKVSHDNLTVERDESSSKKSHTPERFTS) is disordered. In terms of domain architecture, B30.2/SPRY spans 482–659 (NSQPFKLDPK…IITGLPIPDH (178 aa)). Residues 499–520 (VSHDNLTVERDESSSKKSHTPE) are compositionally biased toward basic and acidic residues. A Phosphoserine modification is found at S511.

The protein belongs to the TRIM/RBCC family. In terms of assembly, homodimer or heterodimer with MID2. Interacts with IGBP1.

The protein resides in the cytoplasm. It localises to the cytoskeleton. It catalyses the reaction S-ubiquitinyl-[E2 ubiquitin-conjugating enzyme]-L-cysteine + [acceptor protein]-L-lysine = [E2 ubiquitin-conjugating enzyme]-L-cysteine + N(6)-ubiquitinyl-[acceptor protein]-L-lysine.. Functionally, has E3 ubiquitin ligase activity towards IGBP1, promoting its monoubiquitination, which results in deprotection of the catalytic subunit of protein phosphatase PP2A, and its subsequent degradation by polyubiquitination. This chain is E3 ubiquitin-protein ligase Midline-1 (Mid1), found in Mus spretus (Western Mediterranean mouse).